Consider the following 107-residue polypeptide: Putative pterin-4-alpha-carbinolamine dehydratase (107 aa).

This sequence belongs to the pterin-4-alpha-carbinolamine dehydratase family.

The catalysed reaction is (4aS,6R)-4a-hydroxy-L-erythro-5,6,7,8-tetrahydrobiopterin = (6R)-L-erythro-6,7-dihydrobiopterin + H2O. This is Putative pterin-4-alpha-carbinolamine dehydratase from Rubrobacter xylanophilus (strain DSM 9941 / JCM 11954 / NBRC 16129 / PRD-1).